A 474-amino-acid chain; its full sequence is Putative response regulator NtrX-like (474 aa).

The Response regulatory domain occupies 5 to 121; it reads DVLIVDDEES…KLVILLTRAC (117 aa). Residue Asp54 is modified to 4-aspartylphosphate. In terms of domain architecture, Sigma-54 factor interaction spans 143–368; the sequence is LVGECSVTLK…LRNVVEWTLI (226 aa). Residues 171-178 and 231-240 contribute to the ATP site; these read GKVGSGKE and ANNGTLYIDE.

Functionally, member of the two-component regulatory system RC0849/RC0948. The polypeptide is Putative response regulator NtrX-like (Rickettsia conorii (strain ATCC VR-613 / Malish 7)).